We begin with the raw amino-acid sequence, 1074 residues long: Fibrous sheath CABYR-binding protein (1074 aa).

The tract at residues 1 to 73 (MEECEEPEEP…SKDNYSRKEY (73 aa)) is disordered. 4 positions are modified to phosphoserine: Ser25, Ser57, Ser186, and Ser275. Disordered regions lie at residues 272-294 (QAPS…KDVV) and 317-343 (LVQG…SELP). Residues 274–290 (PSPAEETSAAETATTTA) are compositionally biased toward low complexity. Position 365 is a phosphoserine (Ser365). Disordered stretches follow at residues 437–789 (VSAD…PLES) and 818–982 (GVPA…PLKT). Over residues 448–467 (PPSAEDASEEVASSEVLPPS) the composition is skewed to low complexity. The span at 528-544 (VLPPPAEEAPAEVPPPL) shows a compositional bias: pro residues. The segment covering 558–575 (EEGPAEVPLAPAEEVPAE) has biased composition (low complexity). Pro residues-rich tracts occupy residues 576–592 (FLPP…PPPL) and 673–688 (PLPP…PPPA). Residues 689-720 (TEEAPVEVLPPATEEAPVEVLPPATEEAPVEV) show a composition bias toward low complexity. Ser1020 is subject to Phosphoserine. Positions 1026 to 1054 (SEKELESTTLTSDKMSEGIDSVPEDVSGT) are disordered.

In terms of assembly, interacts with CABYR. Interacts with ROPN1 and ROPN1L; the interaction increases upon spermatozoa capacitation conditions. Post-translationally, phosphorylated by PKA upon spermatozoa capacitation conditions. As to expression, expression is restricted to testis and epididymis, expressed by spermatozoa.

It is found in the cell projection. Its subcellular location is the cilium. It localises to the flagellum. May be involved in the later stages of fibrous sheath biogenesis and spermatozoa capacitation. Inhibits ROPN1 and ROPN1L SUMOylation. Binds calcium. In Mus musculus (Mouse), this protein is Fibrous sheath CABYR-binding protein.